The following is a 385-amino-acid chain: Branched-chain-amino-acid aminotransferase, cytosolic (385 aa).

Lys-221 carries the N6-(pyridoxal phosphate)lysine modification.

The protein belongs to the class-IV pyridoxal-phosphate-dependent aminotransferase family. In terms of assembly, homodimer. It depends on pyridoxal 5'-phosphate as a cofactor. As to expression, expressed in muscles.

It is found in the cytoplasm. It carries out the reaction L-leucine + 2-oxoglutarate = 4-methyl-2-oxopentanoate + L-glutamate. The catalysed reaction is L-isoleucine + 2-oxoglutarate = (S)-3-methyl-2-oxopentanoate + L-glutamate. It catalyses the reaction L-valine + 2-oxoglutarate = 3-methyl-2-oxobutanoate + L-glutamate. Functionally, catalyzes the first reaction in the catabolism of the essential branched chain amino acids leucine, isoleucine, and valine. This Ovis aries (Sheep) protein is Branched-chain-amino-acid aminotransferase, cytosolic (BCAT1).